Here is a 460-residue protein sequence, read N- to C-terminus: Probable lipase C14C8.15 (460 aa).

Residues 1–16 are Cytoplasmic-facing; the sequence is MTLNGNIMKYCLEKGE. The helical; Signal-anchor for type II membrane protein transmembrane segment at 17–37 threads the bilayer; sequence ILISFLLIALESMFRICTVIL. The Lumenal segment spans residues 38–460; the sequence is PSPLRNWFYE…LVDGVMNHTI (423 aa). The active-site Nucleophile is the Ser214. Asn308 carries N-linked (GlcNAc...) asparagine glycosylation. Active-site charge relay system residues include Asp382 and His408. N-linked (GlcNAc...) asparagine glycosylation occurs at Asn457.

It belongs to the AB hydrolase superfamily. Lipase family.

Its subcellular location is the golgi apparatus. It localises to the membrane. Probable lipase. This Schizosaccharomyces pombe (strain 972 / ATCC 24843) (Fission yeast) protein is Probable lipase C14C8.15.